We begin with the raw amino-acid sequence, 181 residues long: Adenylyl-sulfate kinase (181 aa).

An ATP-binding site is contributed by 20–27 (GLSGAGKS). S94 functions as the Phosphoserine intermediate in the catalytic mechanism.

It belongs to the APS kinase family.

It catalyses the reaction adenosine 5'-phosphosulfate + ATP = 3'-phosphoadenylyl sulfate + ADP + H(+). It functions in the pathway sulfur metabolism; hydrogen sulfide biosynthesis; sulfite from sulfate: step 2/3. Its function is as follows. Catalyzes the synthesis of activated sulfate. This is Adenylyl-sulfate kinase from Deinococcus deserti (strain DSM 17065 / CIP 109153 / LMG 22923 / VCD115).